Reading from the N-terminus, the 311-residue chain is Apulose-4-phosphate transketolase subunit B (311 aa).

The protein belongs to the transketolase family. In terms of assembly, probable heterodimer composed of AptA and AptB. The cofactor is thiamine diphosphate.

It catalyses the reaction apulose 4-phosphate + D-glyceraldehyde 3-phosphate = D-xylulose 5-phosphate + dihydroxyacetone phosphate. It functions in the pathway carbohydrate metabolism. Its function is as follows. Involved in catabolism of D-apiose. Catalyzes the transfer of the glycolaldehyde group from apulose-4-phosphate to D-glyceraldehyde 3-phosphate, generating dihydroxyacetone phosphate and D-xylulose-5-phosphate. The sequence is that of Apulose-4-phosphate transketolase subunit B from Actinobacillus succinogenes (strain ATCC 55618 / DSM 22257 / CCUG 43843 / 130Z).